Consider the following 146-residue polypeptide: Ferredoxin-type protein FwdE (146 aa).

4Fe-4S ferredoxin-type domains are found at residues 90–115 (IKLF…TLDN) and 116–145 (FTVG…FIKE). Residues Cys125, Cys128, Cys131, and Cys135 each contribute to the [4Fe-4S] cluster site.

[4Fe-4S] cluster serves as cofactor.

The chain is Ferredoxin-type protein FwdE (fwdE) from Methanocaldococcus jannaschii (strain ATCC 43067 / DSM 2661 / JAL-1 / JCM 10045 / NBRC 100440) (Methanococcus jannaschii).